We begin with the raw amino-acid sequence, 423 residues long: Gamma-glutamyl phosphate reductase (423 aa).

This sequence belongs to the gamma-glutamyl phosphate reductase family.

Its subcellular location is the cytoplasm. The catalysed reaction is L-glutamate 5-semialdehyde + phosphate + NADP(+) = L-glutamyl 5-phosphate + NADPH + H(+). The protein operates within amino-acid biosynthesis; L-proline biosynthesis; L-glutamate 5-semialdehyde from L-glutamate: step 2/2. Catalyzes the NADPH-dependent reduction of L-glutamate 5-phosphate into L-glutamate 5-semialdehyde and phosphate. The product spontaneously undergoes cyclization to form 1-pyrroline-5-carboxylate. The chain is Gamma-glutamyl phosphate reductase from Burkholderia thailandensis (strain ATCC 700388 / DSM 13276 / CCUG 48851 / CIP 106301 / E264).